The primary structure comprises 88 residues: Putative membrane protein insertion efficiency factor (88 aa).

A disordered region spans residues V68 to L88. The segment covering T75–L88 has biased composition (basic and acidic residues).

The protein belongs to the UPF0161 family.

Its subcellular location is the cell inner membrane. In terms of biological role, could be involved in insertion of integral membrane proteins into the membrane. This Burkholderia ambifaria (strain MC40-6) protein is Putative membrane protein insertion efficiency factor.